The sequence spans 218 residues: Cytidylate kinase (218 aa).

An ATP-binding site is contributed by 7–15 (GPSASGKSS).

The protein belongs to the cytidylate kinase family. Type 1 subfamily.

It localises to the cytoplasm. The enzyme catalyses CMP + ATP = CDP + ADP. It catalyses the reaction dCMP + ATP = dCDP + ADP. The protein is Cytidylate kinase of Borrelia hermsii (strain HS1 / DAH).